A 399-amino-acid polypeptide reads, in one-letter code: Acetate kinase (399 aa).

Residue Asn-7 participates in Mg(2+) binding. Residue Lys-14 coordinates ATP. Arg-90 is a substrate binding site. The active-site Proton donor/acceptor is the Asp-147. ATP is bound by residues 207-211 (HLGNG), 282-284 (DFR), and 330-334 (GIGEN). Glu-385 is a Mg(2+) binding site.

It belongs to the acetokinase family. As to quaternary structure, homodimer. It depends on Mg(2+) as a cofactor. Requires Mn(2+) as cofactor.

It is found in the cytoplasm. It carries out the reaction acetate + ATP = acetyl phosphate + ADP. It functions in the pathway metabolic intermediate biosynthesis; acetyl-CoA biosynthesis; acetyl-CoA from acetate: step 1/2. Catalyzes the formation of acetyl phosphate from acetate and ATP. Can also catalyze the reverse reaction. This chain is Acetate kinase, found in Caldicellulosiruptor bescii (strain ATCC BAA-1888 / DSM 6725 / KCTC 15123 / Z-1320) (Anaerocellum thermophilum).